Reading from the N-terminus, the 957-residue chain is Protein CRT10 (957 aa).

The interval 695-719 is disordered; sequence NSTEEDDVNSDPENEESGSSLTSFQ. Positions 697-710 are enriched in acidic residues; sequence TEEDDVNSDPENEE. S704 carries the post-translational modification Phosphoserine.

In terms of assembly, component of a cullin-RING ligase (CRL) composed of 4 subunits: the RING protein HRT1, the cullin RTT101, a linker protein MMS1, and the substrate receptor CRT10. Interacts with MMS1.

In terms of biological role, substrate targeting component of a cullin-RING-based E3 ubiquitin-protein ligase complex RTT101(MMS1-CRT10). RTT101(MMS1-CRT10) may regulate nucleotide synthesis through transcriptional regulation of RNR genes encoding ribonucleotide reductases. The sequence is that of Protein CRT10 (CRT10) from Saccharomyces cerevisiae (strain ATCC 204508 / S288c) (Baker's yeast).